The following is a 1697-amino-acid chain: SAC3 family protein B (1697 aa).

4 disordered regions span residues 54 to 134, 167 to 280, 306 to 413, and 491 to 512; these read PPAS…QPGG, QRPN…SRSN, EATR…EQAR, and ESER…VDGD. Residues 120-134 show a composition bias toward low complexity; the sequence is QNPSPSSGQPYQPGG. Residues 178-192 are compositionally biased toward basic and acidic residues; that stretch reads DGSRNFLKDHGEHSR. Residues 193–202 are compositionally biased toward polar residues; sequence ATSPPATSHI. Positions 215–227 are enriched in basic and acidic residues; that stretch reads RSQDSKRKSRSDI. Composition is skewed to polar residues over residues 233-243, 257-280, and 335-380; these read MGFSRRNQSPV, PLSS…SRSN, and RFST…SPAT. The PCI domain maps to 625–813; sequence NIEQMNKTSV…KCSKLVHMKK (189 aa).

The protein belongs to the SAC3 family. In terms of assembly, interacts with SAC3A, EER5 and CML19. Interacts with UCH1 and UCH2.

It localises to the nucleus. Functionally, component of the TREX-2 complex (transcription and export complex 2), a muliprotein complex that functions in docking export-competent ribonucleoprotein particles (mRNPs) to the nuclear entrance of the nuclear pore complex (nuclear basket). TREX-2 participates in mRNA export and accurate chromatin positioning in the nucleus by tethering genes to the nuclear periphery. The polypeptide is SAC3 family protein B (Arabidopsis thaliana (Mouse-ear cress)).